The primary structure comprises 110 residues: Large ribosomal subunit protein uL22 (110 aa).

This sequence belongs to the universal ribosomal protein uL22 family. Part of the 50S ribosomal subunit.

This protein binds specifically to 23S rRNA; its binding is stimulated by other ribosomal proteins, e.g. L4, L17, and L20. It is important during the early stages of 50S assembly. It makes multiple contacts with different domains of the 23S rRNA in the assembled 50S subunit and ribosome. In terms of biological role, the globular domain of the protein is located near the polypeptide exit tunnel on the outside of the subunit, while an extended beta-hairpin is found that lines the wall of the exit tunnel in the center of the 70S ribosome. The chain is Large ribosomal subunit protein uL22 from Acinetobacter baylyi (strain ATCC 33305 / BD413 / ADP1).